The sequence spans 252 residues: Cell division protein ZapD (252 aa).

The protein belongs to the ZapD family. In terms of assembly, interacts with FtsZ.

The protein localises to the cytoplasm. Its function is as follows. Cell division factor that enhances FtsZ-ring assembly. Directly interacts with FtsZ and promotes bundling of FtsZ protofilaments, with a reduction in FtsZ GTPase activity. The chain is Cell division protein ZapD from Cupriavidus pinatubonensis (strain JMP 134 / LMG 1197) (Cupriavidus necator (strain JMP 134)).